The primary structure comprises 210 residues: Ribonuclease HII (210 aa).

One can recognise an RNase H type-2 domain in the interval 18-210 (GLIAGVDEVG…FKPVKALLGL (193 aa)). A divalent metal cation contacts are provided by aspartate 24, glutamate 25, and aspartate 116.

It belongs to the RNase HII family. The cofactor is Mn(2+). Mg(2+) is required as a cofactor.

The protein localises to the cytoplasm. The catalysed reaction is Endonucleolytic cleavage to 5'-phosphomonoester.. In terms of biological role, endonuclease that specifically degrades the RNA of RNA-DNA hybrids. The sequence is that of Ribonuclease HII from Shewanella baltica (strain OS155 / ATCC BAA-1091).